The following is a 153-amino-acid chain: ORM1-like protein 3 (153 aa).

The interval 1–17 (MNVGTAHSEVNPNTRVM) is important for ceramide level-sensing. Over 1–21 (MNVGTAHSEVNPNTRVMNSRG) the chain is Cytoplasmic. A run of 2 helical transmembrane segments spans residues 22–42 (IWLS…SIPF) and 43–63 (VSVP…MYIF). At 64 to 94 (LHTVKGTPFETPDQGKARLLTHWEQMDYGVQ) the chain is on the cytoplasmic side. A helical transmembrane segment spans residues 95–117 (FTASRKFLTITPIVLYFLTSFYT). The Extracellular segment spans residues 118–121 (KYDQ). The chain crosses the membrane as a helical span at residues 122–142 (IHFVLNTVSLMSVLIPKLPQL). Pro-137 is subject to Hydroxyproline. Topologically, residues 143 to 153 (HGVRIFGINKY) are cytoplasmic.

Belongs to the ORM family. Ceramide-sensitive subunit of the serine palmitoyltransferase (SPT) complex, which is also composed of SPTLC1, SPTLC2/3 and SPTSSA/B. In terms of processing, when hydroxylated at Pro-137, ubiquitinated via 'Lys-48'-linkage, leading to proteasomal degradation. In endothelial cells, ORMDL3 proteasomal degradation is controlled by the sphingosine 1-phosphate receptor signaling pathway.

It is found in the endoplasmic reticulum membrane. Functionally, plays an essential role in the homeostatic regulation of sphingolipid de novo biosynthesis by modulating the activity of the serine palmitoyltransferase (SPT) in response to ceramide levels. When complexed to SPT, the binding of ceramides to its N-terminus stabilizes a conformation that block SPT substrate entry, hence preventing SPT catalytic activity. Through this mechanism, maintains ceramide levels at sufficient concentrations for the production of complex sphingolipids, but which prevents the accumulation of ceramides to levels that trigger apoptosis. The sequence is that of ORM1-like protein 3 (ORMDL3) from Ailuropoda melanoleuca (Giant panda).